A 709-amino-acid polypeptide reads, in one-letter code: MPSATSHSGSGSKSSGPPPPSGSSGSEAAAGAGAAAPASQHPATGTGAVQTEAMKQILGVIDKKLRNLEKKKGKLDDYQERMNKGERLNQDQLDAVSKYQEVTNNLEFAKELQRSFMALSQDIQKTIKKTARREQLMREEAEQKRLKTVLELQYVLDKLGDDEVRTDLKQGLNGVPILSEEELSLLDEFYKLVDPERDMSLRLNEQYEHASIHLWDLLEGKEKPVCGTTYKVLKEIVERVFQSNYFDSTHNHQNGLCEEEEAASAPAVEDQVPEAEPEPAEEYTEQSEVESTEYVNRQFMAETQFTSGEKEQVDEWTVETVEVVNSLQQQPQAASPSVPEPHSLTPVAQADPLVRRQRVQDLMAQMQGPYNFIQDSMLDFENQTLDPAIVSAQPMNPTQNMDMPQLVCPPVHSESRLAQPNQVPVQPEATQVPLVSSTSEGYTASQPLYQPSHATEQRPQKEPIDQIQATISLNTDQTTASSSLPAASQPQVFQAGTSKPLHSSGINVNAAPFQSMQTVFNMNAPVPPVNEPETLKQQNQYQASYNQSFSSQPHQVEQTELQQEQLQTVVGTYHGSPDQSHQVTGNHQQPPQQNTGFPRSNQPYYNSRGVSRGGSRGARGLMNGYRGPANGFRGGYDGYRPSFSNTPNSGYTQSQFSAPRDYSGYQRDGYQQNFKRGSGQSGPRGAPRGRGGPPRPNRGMPQMNTQQVN.

Low complexity-rich tracts occupy residues 1–15 (MPSA…SKSS) and 22–43 (GSSG…QHPA). Positions 1 to 50 (MPSATSHSGSGSKSSGPPPPSGSSGSEAAAGAGAAAPASQHPATGTGAVQ) are disordered. At P2 the chain carries N-acetylproline. P2 is subject to N-acetylalanine. Residue S10 is modified to Phosphoserine. Positions 60–94 (VIDKKLRNLEKKKGKLDDYQERMNKGERLNQDQLD) form a coiled coil. S115 carries the phosphoserine modification. Residues 125 to 153 (KTIKKTARREQLMREEAEQKRLKTVLELQ) are a coiled coil. Omega-N-methylarginine is present on R165. Residues 260 to 291 (EEAASAPAVEDQVPEAEPEPAEEYTEQSEVES) form a disordered region. The span at 271–291 (QVPEAEPEPAEEYTEQSEVES) shows a compositional bias: acidic residues. A phosphoserine mark is found at S335 and S343. The G3BP1-binding stretch occupies residues 360-381 (QDLMAQMQGPYNFIQDSMLDFE). Disordered stretches follow at residues 417 to 446 (LAQP…TASQ), 475 to 499 (TDQT…GTSK), and 524 to 709 (APVP…QQVN). Residues 433 to 446 (PLVSSTSEGYTASQ) show a composition bias toward polar residues. Composition is skewed to low complexity over residues 477-491 (QTTA…SQPQ) and 537-570 (QQNQ…QTVV). Residues 577 to 605 (PDQSHQVTGNHQQPPQQNTGFPRSNQPYY) are compositionally biased toward polar residues. Y625 is subject to Phosphotyrosine; by EPHA4. Omega-N-methylarginine is present on residues R626 and R633. Phosphotyrosine; by EPHA4 occurs at positions 636 and 639. Omega-N-methylarginine is present on R640. The span at 642 to 657 (SFSNTPNSGYTQSQFS) shows a compositional bias: polar residues. Residues S644 and S649 are each glycosylated (O-linked (GlcNAc) serine). Y651, Y662, Y665, and Y670 each carry phosphotyrosine; by EPHA4. 2 stretches are compositionally biased toward low complexity: residues 676-686 (RGSGQSGPRGA) and 697-709 (NRGM…QQVN). R698 is subject to Asymmetric dimethylarginine; alternate. Position 698 is an omega-N-methylarginine; alternate (R698).

It belongs to the caprin family. As to quaternary structure, may form homomultimers. Interacts with G3BP1; interaction is direct and promotes stress granule formation. Interacts with G3BP2; interaction is direct and promotes stress granule formation. Interacts with PQBP1. Interacts with DDX3X. Interacts (when phosphorylated by EPHA4) with FMR1; interaction with FMR1 promotes formation of a membraneless compartment. (Microbial infection) Interacts with Zika virus capsid protein C; this interaction is probably linked to the inhibition of stress granules formation by the virus. In terms of assembly, (Microbial infection) Interacts with rotavirus A non-structural protein 5; this interaction probably plays a role in the sequestration of CAPRIN1 in viral factories. As to quaternary structure, (Microbial infection) Interacts with Japanese encephalitis virus capsid protein C; this interaction is involved in the suppression of the integrated stress response by the virus. Post-translationally, tyrosine phosphorylation by EPHA4 promotes interaction with FMR1 and liquid-liquid phase separation (LLPS) for the formation of a membraneless compartment that concentrates mRNAs with associated regulatory factors. In terms of processing, O-glycosylated (O-GlcNAcylated), in a cell cycle-dependent manner. O-glycosylation by OGT inhibit ability to undergo liquid-liquid phase separation (LLPS). In terms of tissue distribution, ubiquitous.

The protein localises to the cytoplasm. It is found in the cytoplasmic ribonucleoprotein granule. The protein resides in the cytosol. Its subcellular location is the cell projection. It localises to the dendrite. The protein localises to the lamellipodium. Its activity is regulated as follows. Ability to mediate liquid-liquid phase separation is regulated by ATP: moderate concentrations of ATP enhance phase separation, whereas high concentrations of ATP lead to inhibition of phase separation. MRNA-binding protein that acts as a regulator of mRNAs transport, translation and/or stability, and which is involved in neurogenesis, synaptic plasticity in neurons and cell proliferation and migration in multiple cell types. Plays an essential role in cytoplasmic stress granule formation. Acts as an mRNA regulator by mediating formation of some phase-separated membraneless compartment: undergoes liquid-liquid phase separation upon binding to target mRNAs, leading to assemble mRNAs into cytoplasmic ribonucleoprotein granules that concentrate mRNAs with associated regulatory factors. Undergoes liquid-liquid phase separation following phosphorylation and interaction with FMR1, promoting formation of cytoplasmic ribonucleoprotein granules that concentrate mRNAs with factors that inhibit translation and mediate deadenylation of target mRNAs. In these cytoplasmic ribonucleoprotein granules, CAPRIN1 mediates recruitment of CNOT7 deadenylase, leading to mRNA deadenylation and degradation. Binds directly and selectively to MYC and CCND2 mRNAs. In neuronal cells, directly binds to several mRNAs associated with RNA granules, including BDNF, CAMK2A, CREB1, MAP2, NTRK2 mRNAs, as well as to GRIN1 and KPNB1 mRNAs, but not to rRNAs. This Homo sapiens (Human) protein is Caprin-1.